Here is a 144-residue protein sequence, read N- to C-terminus: Small polypeptide DEVIL 15 (144 aa).

Asn8 is a glycosylation site (N-linked (GlcNAc...) asparagine). The disordered stretch occupies residues 22–63 (SSSSKPFFTRSFSTKTSSSPSSKSHFTRSFSTKPSSSSSSSD). A helical transmembrane segment spans residues 104 to 120 (ILSKKGASVTGKCFKVA). A required for DVL/RTFL small polypeptide activity region spans residues 111 to 142 (SVTGKCFKVAKEHKSRFYIIKRCVLMLVCWHK).

Belongs to the DVL/RTFL small polypeptides family.

It is found in the cell membrane. In terms of biological role, small polypeptide acting as a regulatory molecule which coordinates cellular responses required for differentiation, growth and development, probably by restricting polar cell proliferation in lateral organs and coordinating socket cell recruitment and differentiation at trichome sites. This is Small polypeptide DEVIL 15 from Arabidopsis thaliana (Mouse-ear cress).